Reading from the N-terminus, the 173-residue chain is Large ribosomal subunit protein uL10 (173 aa).

This sequence belongs to the universal ribosomal protein uL10 family. As to quaternary structure, part of the ribosomal stalk of the 50S ribosomal subunit. The N-terminus interacts with L11 and the large rRNA to form the base of the stalk. The C-terminus forms an elongated spine to which L12 dimers bind in a sequential fashion forming a multimeric L10(L12)X complex.

In terms of biological role, forms part of the ribosomal stalk, playing a central role in the interaction of the ribosome with GTP-bound translation factors. The sequence is that of Large ribosomal subunit protein uL10 from Bifidobacterium animalis subsp. lactis (strain AD011).